The following is a 181-amino-acid chain: Shikimate kinase (181 aa).

Position 11 to 16 (G11 to K16) interacts with ATP. Residue S15 participates in Mg(2+) binding. Substrate-binding residues include D33, R58, and G80. R128 lines the ATP pocket. R144 contributes to the substrate binding site.

Belongs to the shikimate kinase family. Monomer. The cofactor is Mg(2+).

It localises to the cytoplasm. It catalyses the reaction shikimate + ATP = 3-phosphoshikimate + ADP + H(+). The protein operates within metabolic intermediate biosynthesis; chorismate biosynthesis; chorismate from D-erythrose 4-phosphate and phosphoenolpyruvate: step 5/7. Functionally, catalyzes the specific phosphorylation of the 3-hydroxyl group of shikimic acid using ATP as a cosubstrate. In Leptospira biflexa serovar Patoc (strain Patoc 1 / Ames), this protein is Shikimate kinase.